An 835-amino-acid polypeptide reads, in one-letter code: Leucine--tRNA ligase (835 aa).

A 'HIGH' region motif is present at residues 36–46; it reads PYPSGKIHVGH. Residues 602–606 carry the 'KMSKS' region motif; it reads KMSKS. An ATP-binding site is contributed by K605.

This sequence belongs to the class-I aminoacyl-tRNA synthetase family.

It is found in the cytoplasm. It carries out the reaction tRNA(Leu) + L-leucine + ATP = L-leucyl-tRNA(Leu) + AMP + diphosphate. The protein is Leucine--tRNA ligase of Rickettsia felis (strain ATCC VR-1525 / URRWXCal2) (Rickettsia azadi).